The chain runs to 680 residues: MRSRSNGMGKIVGIDLGTTNSVIAVLEGGKPVVIANAEGSRTTPSVVAFGKDGERLVGQLARRQAVLNPQNTFYAVKRFIGREYSELTAESKRVPYTIRRDESGKVRIKCPRLQREFAPEEISAMVLRKLVEDASRYLGEPVTDAVITVPAYFNDSQRQATRDAGRIAGLNVRRIINEPTAAALAYGLDRQQEQTILVFDLGGGTFDVSILEVGDGVFEVKATSGDTQLGGNDFDKLIVDWLAEDFLAKEGIDLRRDRQSLQRLTDAAEKAKIELSGLLETNIDLPFVTATAEGPKHIETTLSRRQFEDLSQGLLQRLRYPVEQALMDAHLTPSQIDAVVLVGGATRMPMVQDLVRQMIGREPKQNVNPDEVVAVGAAIQAGILAGDVKDILLLDVTPLSLGVETIGGVTKVLIPRNTTIPVRRSDIFSTSENNQSQVEIHVVQGERELAAHNKSLGRFKLTGIPPAPRGVPQIQVSFDLDANGLLQVVALDRFSGREQSVVIQGASTLSEEEIQQMLLDAESNAAGDRQRRARIEKRNRSQDLINRAERQLREAAQEFGYQFAAEQRRGIEALVRQLQEAIRNEDDRQIDLTYAALEERLYDFIRQLRLREEEAEDDEEVFKLPNLREAVNKGLDVVRGRERRRDDDEDEWAEPPRTRRSRSYSQRADSAPWDDWDDDW.

Position 205 is a phosphothreonine; by autocatalysis (T205). Residues 640 to 680 are disordered; sequence GRERRRDDDEDEWAEPPRTRRSRSYSQRADSAPWDDWDDDW.

The protein belongs to the heat shock protein 70 family.

Its function is as follows. Acts as a chaperone. The polypeptide is Chaperone protein dnaK3 (dnaK3) (Thermosynechococcus vestitus (strain NIES-2133 / IAM M-273 / BP-1)).